The chain runs to 4760 residues: Nonribosomal peptide synthetase cm3A (4760 aa).

The span at 1-12 (MKHLASSENMPT) shows a compositional bias: polar residues. Positions 1–24 (MKHLASSENMPTPAQDRAPSPSAM) are disordered. The Carrier 1 domain occupies 19 to 95 (PSPSAMQQEI…ELSRSAECQL (77 aa)). The residue at position 56 (Ser56) is an O-(pantetheine 4'-phosphoryl)serine. Condensation regions lie at residues 142–570 (QDIF…EIEQ) and 178–571 (PGLS…IEQL). The tract at residues 591 to 984 (DEQARLCPDA…GRRDTQVKLR (394 aa)) is adenylation 1. The Carrier 2 domain occupies 1120-1197 (REATTLQLQI…KLTEKLGVPE (78 aa)). The residue at position 1158 (Ser1158) is an O-(pantetheine 4'-phosphoryl)serine. Condensation stretches follow at residues 1210–1654 (FPLS…KTPS) and 1689–2125 (VEDM…NVTT). The interval 2171–2551 (DGDLTYFELD…DRKDWQIKIR (381 aa)) is adenylation 2. The region spanning 2684-2762 (LPSSETEKTV…ELAHAIDQRS (79 aa)) is the Carrier 3 domain. Residue Ser2721 is modified to O-(pantetheine 4'-phosphoryl)serine. A condensation 4 region spans residues 2811–3203 (VEDIYPCTPL…RFKHIFGQLS (393 aa)). The segment at 3255–3647 (SATTPDRPAV…GRADQQLKIR (393 aa)) is adenylation 3. Residues 3783-3857 (TRTEELMQSV…QLAQRATTDA (75 aa)) form the Carrier 4 domain. 2 condensation regions span residues 3869 to 4296 (EFRL…TLLC) and 4340 to 4757 (EDIY…EEMG).

Belongs to the nrps family.

It functions in the pathway secondary metabolite biosynthesis. Its function is as follows. Nonribosomal peptide synthetase; part of the gene cluster that mediates the biosynthesis of beauveriolides I and III, cyclodepsipeptides acting as inhibitors of the acyl-CoA:cholesterol acyltransferase. The HR-PKS cm3B initiates the biosynthesis of beauveriolides by iteratively catalyzing the formation of the linear polyketide chain. The ATP-dependent acetyl-CoA ligase cm3D converts the polyketide carboxylic acid to a CoA thioester which id shuttled to the first T domain in the NRPS cm3A by the acetyltransferase cm3C. Cm3A contains 13 domains and assembles the polyketide chain, L-phenylalanine, L-alanine, and D-leucine (or D-allo-isoleucine) to form beauveriolide I (or beauveriolide III). The production of both beauveriolides I and III suggests the substrate adaptability of cm3B, using different amino acids as substrates. This is Nonribosomal peptide synthetase cm3A from Cordyceps militaris (strain CM01) (Caterpillar fungus).